The chain runs to 237 residues: Ribosomal RNA small subunit methyltransferase G (237 aa).

S-adenosyl-L-methionine contacts are provided by residues Gly78, Phe83, 129–130 (AE), and Arg148.

Belongs to the methyltransferase superfamily. RNA methyltransferase RsmG family.

It is found in the cytoplasm. Functionally, specifically methylates the N7 position of a guanine in 16S rRNA. The sequence is that of Ribosomal RNA small subunit methyltransferase G from Streptococcus equi subsp. zooepidemicus (strain MGCS10565).